We begin with the raw amino-acid sequence, 208 residues long: Outer-membrane lipoprotein LolB (208 aa).

The signal sequence occupies residues 1–17 (MIRRLLGVALLTGAITG). Cysteine 18 is lipidated: N-palmitoyl cysteine. Cysteine 18 is lipidated: S-diacylglycerol cysteine.

This sequence belongs to the LolB family. In terms of assembly, monomer.

Its subcellular location is the cell outer membrane. Plays a critical role in the incorporation of lipoproteins in the outer membrane after they are released by the LolA protein. In Marinobacter nauticus (strain ATCC 700491 / DSM 11845 / VT8) (Marinobacter aquaeolei), this protein is Outer-membrane lipoprotein LolB.